Reading from the N-terminus, the 204-residue chain is N-(5'-phosphoribosyl)anthranilate isomerase (204 aa).

It belongs to the TrpF family.

It catalyses the reaction N-(5-phospho-beta-D-ribosyl)anthranilate = 1-(2-carboxyphenylamino)-1-deoxy-D-ribulose 5-phosphate. The protein operates within amino-acid biosynthesis; L-tryptophan biosynthesis; L-tryptophan from chorismate: step 3/5. The protein is N-(5'-phosphoribosyl)anthranilate isomerase of Bacillus cereus (strain AH820).